A 3926-amino-acid chain; its full sequence is Hybrid PKS-NRPS synthetase LUC5 (3926 aa).

Positions 8–439 (REPIAIVGTA…GTNAHAIIES (432 aa)) constitute a Ketosynthase family 3 (KS3) domain. Catalysis depends on for beta-ketoacyl synthase activity residues Cys-181, His-318, and His-359. Positions 545 to 863 (VFTGQGAQWP…QGALTRNVHD (319 aa)) are malonyl-CoA:ACP transacylase (MAT) domain. Residues 932–1065 (HPLLGTRSTE…GHLRVDFGSE (134 aa)) are N-terminal hotdog fold. The tract at residues 932-1225 (HPLLGTRSTE…GLTCTSLLRP (294 aa)) is dehydratase (DH) domain. One can recognise a PKS/mFAS DH domain in the interval 932–1228 (HPLLGTRSTE…CTSLLRPGPS (297 aa)). His-964 serves as the catalytic Proton acceptor; for dehydratase activity. Residues 1081–1228 (LTSVNIERFY…CTSLLRPGPS (148 aa)) are C-terminal hotdog fold. Catalysis depends on Asp-1138, which acts as the Proton donor; for dehydratase activity. The C-methyltransferase (CMeT) domain stretch occupies residues 1344–1572 (IRAVGENLTE…VNDFYDPSKY (229 aa)). Residues 2091–2265 (TYLLAGCTGG…AASVIHIGMI (175 aa)) form a ketoreductase (KR) domain 1 region. A Carrier 1 domain is found at 2371-2448 (EMLEVVEEEF…EICSTAVASL (78 aa)). Position 2408 is an O-(pantetheine 4'-phosphoryl)serine (Ser-2408). The span at 2474-2506 (VSGNGSSSSRAPTEFNSSTLKSGAQSTQGTSVS) shows a compositional bias: polar residues. Positions 2474 to 2518 (VSGNGSSSSRAPTEFNSSTLKSGAQSTQGTSVSGDKDTNSVDGSA) are disordered. Residues 2507–2518 (GDKDTNSVDGSA) show a composition bias toward basic and acidic residues. The interval 2525–2810 (PLSFAQERIW…VNLLPLRFQL (286 aa)) is condensation. The adenylation stretch occupies residues 2979–3389 (DWVKRQPDAI…RIAGDSQIKL (411 aa)). The 80-residue stretch at 3501–3580 (ETLTTTQERL…GMAAKIDGST (80 aa)) folds into the Carrier 2 domain. Position 3540 is an O-(pantetheine 4'-phosphoryl)serine (Ser-3540). The tract at residues 3619-3840 (LTGATGFLGL…DFVPVEQVAD (222 aa)) is thiolester reductase (TE) domain.

This sequence in the C-terminal section; belongs to the NRP synthetase family.

Its pathway is mycotoxin biosynthesis. In terms of biological role, hybrid PKS-NRPS synthetase; part of the gene cluster that mediates the biosynthesis of the mycotoxin lucilactaene and the lucilactaene-related compound NG-391 that act as cell cycle inhibitors with potent growth inhibitory activity against malarial parasites, moderate growth inhibitory activity against cancer cells, and no activity against bacteria and fungi. The hybrid PKS-NRPS synthetase LUC5 is responsible for the condensation of one acetyl-coenzyme A (CoA) unit with six malonyl-CoA units and the amide linkage of the arising heptaketide and homoserine, subsequently releasing the first intermediate prelucilactaene B, as an alcohol with an open ring structure. Lucilactaene and NG-391 lack the 7-methyl group present in fusarins which is inserted in fusarins by the C-methyltransferase (CMeT) domain of the fusarin synthetase FUS1, suggesting that the CMet domain of LUC5 does not methylate this position. Within the pathway, both the cytochrome P450 monooxygenase LUC2 and the hydrolase LUC6 function in parallel in modification of prelucilactaene B. LUC6 may catalyze the 2-pyrrolidone ring formation to form prelucilactaene C from prelucilactaene B, followed by C-15 hydroxylation by the same enzyme to give prelucilactaene D, which is then converted to prelucilactaene E by epoxidation, and finally to prelucilactaene F by cyclization. Prelucilactane D, prelucilactaene E, and prelucilactaene F can be converted to dihydrolucilactaene, NG391, and lucilactaene, respectively, via C-20 methyl group hydroxylation by the cytochrome P450 monooxygenase LUC2. However, LUC2, unlike FUS8 in fusarin C biosynthesis, is not enough for the full oxidation of the C-20 methyl group into carboxylic acid, which is a prerequisite for the final methylation step. The aldehyde dehydrogenase LUC3 is involved in the biosynthesis by further oxidation of the C-20 alcoholic analog prelucilactaene G into a carboxylic derivative. This unidentified carboxylic derivative may be converted to demethyllucilactaene. As the last step, the methyltransferase LUC1 methylates the hydroxyl group at C-21 of demethyllucilactaene to generate lucilactaene. The protein is Hybrid PKS-NRPS synthetase LUC5 of Fusarium sp.